Reading from the N-terminus, the 94-residue chain is Progonadoliberin-3 (94 aa).

Residues 1–23 (MEWKGRVLVQLLMLVCVLEVSLC) form the signal peptide. Position 24 is a pyrrolidone carboxylic acid (Gln24). The residue at position 33 (Gly33) is a Glycine amide.

The protein belongs to the GnRH family.

Its subcellular location is the secreted. In terms of biological role, stimulates the secretion of gonadotropins. This chain is Progonadoliberin-3 (gnrh3), found in Rutilus rutilus (Roach).